The following is a 678-amino-acid chain: Ribonuclease Z 2, mitochondrial (678 aa).

The N-terminal 37 residues, methionine 1–arginine 37, are a transit peptide targeting the mitochondrion.

This sequence belongs to the RNase Z family. The cofactor is Zn(2+).

It localises to the mitochondrion. The protein resides in the cytoplasm. It carries out the reaction Endonucleolytic cleavage of RNA, removing extra 3' nucleotides from tRNA precursor, generating 3' termini of tRNAs. A 3'-hydroxy group is left at the tRNA terminus and a 5'-phosphoryl group is left at the trailer molecule.. In terms of biological role, zinc phosphodiesterase, which displays some tRNA 3'-processing endonuclease activity. May be involved in tRNA maturation, by removing a 3'-trailer from precursor tRNA. The sequence is that of Ribonuclease Z 2, mitochondrial (trz2) from Schizosaccharomyces pombe (strain 972 / ATCC 24843) (Fission yeast).